Here is a 410-residue protein sequence, read N- to C-terminus: Chaperonin GroEL (410 aa).

ATP contacts are provided by residues 29–32, Lys-50, and 86–90; these read TAGP and DGTTT.

Belongs to the chaperonin (HSP60) family. As to quaternary structure, forms a cylinder of 14 subunits composed of two heptameric rings stacked back-to-back. Interacts with the co-chaperonin GroES.

It is found in the cytoplasm. The catalysed reaction is ATP + H2O + a folded polypeptide = ADP + phosphate + an unfolded polypeptide.. Its function is as follows. Together with its co-chaperonin GroES, plays an essential role in assisting protein folding. The GroEL-GroES system forms a nano-cage that allows encapsulation of the non-native substrate proteins and provides a physical environment optimized to promote and accelerate protein folding. This Ehrlichia canis protein is Chaperonin GroEL.